Consider the following 1178-residue polypeptide: Pesticidal crystal protein Cry1Ac (1178 aa).

This sequence belongs to the delta endotoxin family.

Promotes colloidosmotic lysis by binding to the midgut epithelial cells of many lepidopteran larvae. This chain is Pesticidal crystal protein Cry1Ac (cry1Ac), found in Bacillus thuringiensis subsp. kurstaki.